The chain runs to 117 residues: Large ribosomal subunit protein bL20 (117 aa).

It belongs to the bacterial ribosomal protein bL20 family.

Functionally, binds directly to 23S ribosomal RNA and is necessary for the in vitro assembly process of the 50S ribosomal subunit. It is not involved in the protein synthesizing functions of that subunit. The protein is Large ribosomal subunit protein bL20 of Limosilactobacillus fermentum (strain NBRC 3956 / LMG 18251) (Lactobacillus fermentum).